We begin with the raw amino-acid sequence, 478 residues long: Glutamine synthetase (478 aa).

A GS beta-grasp domain is found at 16–100 (EKVEYVDVRF…INFFVHDPFT (85 aa)). The region spanning 108–478 (PRNIARKAEN…PYEFALYYDV (371 aa)) is the GS catalytic domain. Mg(2+)-binding residues include Glu133 and Glu135. Position 214 (Glu214) interacts with ATP. Residues Glu219 and Glu227 each coordinate Mg(2+). 230–232 (YQF) provides a ligand contact to ATP. L-glutamate is bound by residues 271 to 272 (NG) and Gly272. His276 provides a ligand contact to Mg(2+). Residues 278 to 280 (HQS) and Ser280 each bind ATP. Residues Arg329, Glu335, and Arg347 each coordinate L-glutamate. Arg347, Arg352, and Lys361 together coordinate ATP. Mg(2+) is bound at residue Glu366. An L-glutamate-binding site is contributed by Arg368. Tyr406 is subject to O-AMP-tyrosine.

The protein belongs to the glutamine synthetase family. In terms of assembly, oligomer of 12 subunits arranged in the form of two hexagons. It depends on Mg(2+) as a cofactor.

It localises to the cytoplasm. It catalyses the reaction L-glutamate + NH4(+) + ATP = L-glutamine + ADP + phosphate + H(+). With respect to regulation, when cellular nitrogen levels are high, the C-terminal adenylyl transferase (AT) of GlnE inhibits GlnA by covalent transfer of an adenylyl group from ATP to Tyr-406. Conversely, when nitrogen levels are low, the N-terminal adenylyl removase (AR) of GlnE activates GlnA by removing the adenylyl group by phosphorolysis. The fully adenylated enzyme complex is inactive. Its function is as follows. Involved in nitrogen metabolism via ammonium assimilation. Catalyzes the ATP-dependent biosynthesis of glutamine from glutamate and ammonia. Also plays a key role in controlling the ammonia levels within infected host cells and so contributes to the pathogens capacity to inhibit phagosome acidification and phagosome-lysosome fusion. Involved in cell wall biosynthesis via the production of the major component poly-L-glutamine (PLG). PLG synthesis in the cell wall occurs only in nitrogen limiting conditions and on the contrary high nitrogen conditions inhibit PLG synthesis. This Mycobacterium bovis (strain ATCC BAA-935 / AF2122/97) protein is Glutamine synthetase.